Here is a 147-residue protein sequence, read N- to C-terminus: Ribosome maturation factor RimP (147 aa).

Belongs to the RimP family.

Its subcellular location is the cytoplasm. Required for maturation of 30S ribosomal subunits. The sequence is that of Ribosome maturation factor RimP from Legionella pneumophila (strain Paris).